Consider the following 282-residue polypeptide: Biotin synthase (282 aa).

The region spanning 1–228 (MQEIFLCSIS…NARLMVAGGR (228 aa)) is the Radical SAM core domain. [4Fe-4S] cluster is bound by residues cysteine 17, cysteine 21, and cysteine 24. Positions 61, 96, 154, and 221 each coordinate [2Fe-2S] cluster.

This sequence belongs to the radical SAM superfamily. Biotin synthase family. In terms of assembly, homodimer. [4Fe-4S] cluster is required as a cofactor. [2Fe-2S] cluster serves as cofactor.

It catalyses the reaction (4R,5S)-dethiobiotin + (sulfur carrier)-SH + 2 reduced [2Fe-2S]-[ferredoxin] + 2 S-adenosyl-L-methionine = (sulfur carrier)-H + biotin + 2 5'-deoxyadenosine + 2 L-methionine + 2 oxidized [2Fe-2S]-[ferredoxin]. Its pathway is cofactor biosynthesis; biotin biosynthesis; biotin from 7,8-diaminononanoate: step 2/2. Its function is as follows. Catalyzes the conversion of dethiobiotin (DTB) to biotin by the insertion of a sulfur atom into dethiobiotin via a radical-based mechanism. This Helicobacter pylori (strain Shi470) protein is Biotin synthase.